We begin with the raw amino-acid sequence, 417 residues long: MSLEKMGQAAREAAYQLATISTAQKNWALAAIADELEARSSQILAANDKDIAAGREAGLSEAMLDRLLLNPARLAGIVADVRKVITLDDPVGAEIDCRVLENGLRLSRRRVPIGVIGVIYEARPNVTIDIASLCLKTGNASMLRGGRETFHSNLELVRVIQAALAASGLPAEAVQYIDNPDRALVGELLRLDRYVDMIIPRGGAGLHKMCKENSSIPVIIGGFGISHVFVDESADPVRSLAVIENAKVQRPSACNALDTLLVHKKIAASFLPQLVRLMNERQVTLVAAPNAMSLLAGADNLCEAGPEDFDTEWLGLTLGIKLVADVNEALAHMREHNAGHSDAILTNDLANAERFVNGAGSAAVYVNASTRFTDGGQFGLGAEVAVSTQMLHARGPMGLTELTSYKWVGLADYLICA.

It belongs to the gamma-glutamyl phosphate reductase family.

It is found in the cytoplasm. The enzyme catalyses L-glutamate 5-semialdehyde + phosphate + NADP(+) = L-glutamyl 5-phosphate + NADPH + H(+). The protein operates within amino-acid biosynthesis; L-proline biosynthesis; L-glutamate 5-semialdehyde from L-glutamate: step 2/2. In terms of biological role, catalyzes the NADPH-dependent reduction of L-glutamate 5-phosphate into L-glutamate 5-semialdehyde and phosphate. The product spontaneously undergoes cyclization to form 1-pyrroline-5-carboxylate. This chain is Gamma-glutamyl phosphate reductase, found in Aeromonas salmonicida (strain A449).